The following is a 172-amino-acid chain: Adenine phosphoribosyltransferase (172 aa).

This sequence belongs to the purine/pyrimidine phosphoribosyltransferase family. As to quaternary structure, homodimer.

The protein localises to the cytoplasm. The catalysed reaction is AMP + diphosphate = 5-phospho-alpha-D-ribose 1-diphosphate + adenine. It participates in purine metabolism; AMP biosynthesis via salvage pathway; AMP from adenine: step 1/1. Catalyzes a salvage reaction resulting in the formation of AMP, that is energically less costly than de novo synthesis. This Ligilactobacillus salivarius (strain UCC118) (Lactobacillus salivarius) protein is Adenine phosphoribosyltransferase.